A 207-amino-acid polypeptide reads, in one-letter code: C-type lectin domain family 2 member D11 (207 aa).

Residues 1–44 (MSAKKASQPMLNTTGSLQEGEMGKMFHGKCLRIVSPESPAKLYC) are Cytoplasmic-facing. S7 and S16 each carry phosphoserine. The helical; Signal-anchor for type II membrane protein transmembrane segment at 45 to 65 (CYGVIMVLSVAVVALSVALSV) threads the bilayer. Residues 66-207 (KMTPQISTIN…LQCKTPFSPM (142 aa)) lie on the Extracellular side of the membrane. The C-type lectin domain maps to 87-198 (VGNKCFYFSE…SCSKLNSYSL (112 aa)). N-linked (GlcNAc...) asparagine glycosylation occurs at N100.

It is found in the cell membrane. Functionally, receptor for KLRB1B that protects target cells against natural killer cell-mediated lysis. The sequence is that of C-type lectin domain family 2 member D11 (Clec2d11) from Rattus norvegicus (Rat).